Consider the following 349-residue polypeptide: Ribosomal RNA small subunit methyltransferase H 2 (349 aa).

S-adenosyl-L-methionine contacts are provided by residues 80 to 82 (GGH), D100, F130, D149, and Q156.

Belongs to the methyltransferase superfamily. RsmH family.

Its subcellular location is the cytoplasm. The enzyme catalyses cytidine(1402) in 16S rRNA + S-adenosyl-L-methionine = N(4)-methylcytidine(1402) in 16S rRNA + S-adenosyl-L-homocysteine + H(+). Its function is as follows. Specifically methylates the N4 position of cytidine in position 1402 (C1402) of 16S rRNA. This is Ribosomal RNA small subunit methyltransferase H 2 from Alkaliphilus metalliredigens (strain QYMF).